The following is a 361-amino-acid chain: uncharacterized protein (361 aa).

Residues 1–10 (MRRYLKKAKP) show a composition bias toward basic residues. 2 disordered regions span residues 1–82 (MRRY…SSFH) and 94–147 (ALSH…VNTS). Basic and acidic residues-rich tracts occupy residues 44–57 (KEKNSGKFRVKYEN) and 120–134 (FTKKEEDSSTKESEL). Over residues 135–147 (QTRSSPPLPVNTS) the composition is skewed to polar residues. Positions 295–349 (NILTMDEQIQRLKEAIASEKLQQEERSQIIKSLMEEELEINEQEEKIKHSFIDLD) form a coiled coil.

Its subcellular location is the cytoplasm. The protein localises to the nucleus. This is an uncharacterized protein from Schizosaccharomyces pombe (strain 972 / ATCC 24843) (Fission yeast).